Here is a 406-residue protein sequence, read N- to C-terminus: Vacuole membrane protein 1 (406 aa).

Ala-2 carries the N-acetylalanine modification. The Cytoplasmic portion of the chain corresponds to 2–43; the sequence is AENGQNCDQRRVAMNKEQYNGNFTDPSSVNEKKRRDREERQN. Residues 44–63 form a helical membrane-spanning segment; that stretch reads IVLWRQPLITLQYFSLETLV. The Extracellular portion of the chain corresponds to 64–77; sequence ILKEWTSKLWHRQS. A helical membrane pass occupies residues 78-98; that stretch reads IVVSFLLLLAVLTATYYVEGA. The Cytoplasmic segment spans residues 99-109; it reads HQQYVQRIEKQ. The chain crosses the membrane as a helical span at residues 110–130; sequence FLLYAYWIGLGILSSVGLGTG. Over 131-250 the chain is Extracellular; the sequence is LHTFLLYLGP…ASRAKLAVQN (120 aa). Positions 173–316 are VTT domain; sequence GTEGTISLWS…FVIVAFSKHI (144 aa). Residues 251-271 traverse the membrane as a helical segment; it reads LVQKVGFFGILACASIPNPLF. The Cytoplasmic portion of the chain corresponds to 272 to 273; the sequence is DL. Residues 274–294 form a helical membrane-spanning segment; that stretch reads AGITCGHFLVPFWTFFGATLI. Residues 295–306 lie on the Extracellular side of the membrane; it reads GKAIIKMHIQKL. A helical membrane pass occupies residues 307–327; the sequence is FVIVAFSKHIVEQMVAFIGAV. The Cytoplasmic portion of the chain corresponds to 328–363; the sequence is PGIGPSLQKPFQEYLEAQRQKLHHRSEMGTPQGENW. A helical membrane pass occupies residues 364-384; that stretch reads LSWMFEKLVVVMVCYFILSII. Residues 385-406 lie on the Extracellular side of the membrane; sequence NSMAQSYAKRIQQRLDPKEKTK.

Belongs to the VMP1 family. In terms of assembly, interacts with BECN1. Interacts with TJP1. Interacts with TP53INP2. Interacts with TMEM41B. Interacts with ATP2A2, PLN and SLN; competes with PLN and SLN to prevent them from forming an inhibitory complex with ATP2A2. Interacts with ATG2A.

It is found in the endoplasmic reticulum-Golgi intermediate compartment membrane. The protein resides in the cell membrane. The protein localises to the vacuole membrane. Its subcellular location is the endoplasmic reticulum membrane. It catalyses the reaction a 1,2-diacyl-sn-glycero-3-phospho-L-serine(in) = a 1,2-diacyl-sn-glycero-3-phospho-L-serine(out). The catalysed reaction is cholesterol(in) = cholesterol(out). It carries out the reaction a 1,2-diacyl-sn-glycero-3-phosphocholine(in) = a 1,2-diacyl-sn-glycero-3-phosphocholine(out). The enzyme catalyses a 1,2-diacyl-sn-glycero-3-phosphoethanolamine(in) = a 1,2-diacyl-sn-glycero-3-phosphoethanolamine(out). In terms of biological role, phospholipid scramblase involved in lipid homeostasis and membrane dynamics processes. Has phospholipid scramblase activity toward cholesterol and phosphatidylserine, as well as phosphatidylethanolamine and phosphatidylcholine. Required for autophagosome formation: participates in early stages of autophagosome biogenesis at the endoplasmic reticulum (ER) membrane by reequilibrating the leaflets of the ER as lipids are extracted by ATG2 (ATG2A or ATG2B) to mediate autophagosome assembly. Regulates ATP2A2 activity to control ER-isolation membrane contacts for autophagosome formation. In addition to autophagy, involved in other processes in which phospholipid scramblase activity is required. Modulates ER contacts with lipid droplets, mitochondria and endosomes. Plays an essential role in formation of cell junctions. Upon stress such as bacterial and viral infection, promotes formation of cytoplasmic vacuoles followed by cell death. Involved in the cytoplasmic vacuolization of acinar cells during the early stage of acute pancreatitis. This Bos taurus (Bovine) protein is Vacuole membrane protein 1.